We begin with the raw amino-acid sequence, 560 residues long: DNA ligase B (560 aa).

Lys-124 acts as the N6-AMP-lysine intermediate in catalysis.

This sequence belongs to the NAD-dependent DNA ligase family. LigB subfamily.

It catalyses the reaction NAD(+) + (deoxyribonucleotide)n-3'-hydroxyl + 5'-phospho-(deoxyribonucleotide)m = (deoxyribonucleotide)n+m + AMP + beta-nicotinamide D-nucleotide.. In terms of biological role, catalyzes the formation of phosphodiester linkages between 5'-phosphoryl and 3'-hydroxyl groups in double-stranded DNA using NAD as a coenzyme and as the energy source for the reaction. The chain is DNA ligase B from Escherichia coli O81 (strain ED1a).